Consider the following 168-residue polypeptide: Phosphopantetheine adenylyltransferase (168 aa).

T14 is a substrate binding site. ATP-binding positions include 14 to 15 (TF) and H22. K46, L78, and R92 together coordinate substrate. ATP is bound by residues 93–95 (GLR), E103, and 128–134 (YSFISSS).

It belongs to the bacterial CoaD family. In terms of assembly, homohexamer. Mg(2+) is required as a cofactor.

The protein resides in the cytoplasm. The catalysed reaction is (R)-4'-phosphopantetheine + ATP + H(+) = 3'-dephospho-CoA + diphosphate. Its pathway is cofactor biosynthesis; coenzyme A biosynthesis; CoA from (R)-pantothenate: step 4/5. Reversibly transfers an adenylyl group from ATP to 4'-phosphopantetheine, yielding dephospho-CoA (dPCoA) and pyrophosphate. In Xanthomonas campestris pv. campestris (strain B100), this protein is Phosphopantetheine adenylyltransferase.